The sequence spans 128 residues: Sulfurtransferase TusD (128 aa).

Catalysis depends on Cys78, which acts as the Cysteine persulfide intermediate.

The protein belongs to the DsrE/TusD family. In terms of assembly, heterohexamer, formed by a dimer of trimers. The hexameric TusBCD complex contains 2 copies each of TusB, TusC and TusD. The TusBCD complex interacts with TusE.

It localises to the cytoplasm. Its function is as follows. Part of a sulfur-relay system required for 2-thiolation of 5-methylaminomethyl-2-thiouridine (mnm(5)s(2)U) at tRNA wobble positions. Accepts sulfur from TusA and transfers it in turn to TusE. The polypeptide is Sulfurtransferase TusD (Escherichia coli O45:K1 (strain S88 / ExPEC)).